The following is a 668-amino-acid chain: DNA ligase (668 aa).

NAD(+)-binding positions include 32-36 (DAEYD), 81-82 (SL), and Glu-111. Residue Lys-113 is the N6-AMP-lysine intermediate of the active site. The NAD(+) site is built by Arg-134, Glu-171, Lys-290, and Lys-314. Zn(2+) is bound by residues Cys-408, Cys-411, Cys-426, and Cys-432. One can recognise a BRCT domain in the interval 591-668 (EEDLSLKGQT…DEEALIAILS (78 aa)).

It belongs to the NAD-dependent DNA ligase family. LigA subfamily. Mg(2+) is required as a cofactor. Mn(2+) serves as cofactor.

The catalysed reaction is NAD(+) + (deoxyribonucleotide)n-3'-hydroxyl + 5'-phospho-(deoxyribonucleotide)m = (deoxyribonucleotide)n+m + AMP + beta-nicotinamide D-nucleotide.. Functionally, DNA ligase that catalyzes the formation of phosphodiester linkages between 5'-phosphoryl and 3'-hydroxyl groups in double-stranded DNA using NAD as a coenzyme and as the energy source for the reaction. It is essential for DNA replication and repair of damaged DNA. The polypeptide is DNA ligase (Shewanella pealeana (strain ATCC 700345 / ANG-SQ1)).